The primary structure comprises 473 residues: Photosystem II CP43 reaction center protein (473 aa).

Positions 1–14 (MKTLYSLRRFYHVE) are excised as a propeptide. T15 bears the N-acetylthreonine mark. T15 bears the Phosphothreonine mark. 5 helical membrane passes run 69–93 (LFEVAHFVPEKPMYEQGLILLPHLA), 134–155 (LLGPETLEESFPFFGYVWKDRN), 178–200 (KALYFGGVYDTWAPGGGDVRKIT), 255–275 (KPFAWARRALVWSGEAYLSYS), and 291–312 (WFNNTVYPSEFYGPTGPEASQA). E367 serves as a coordination point for [CaMn4O5] cluster. A helical transmembrane segment spans residues 447 to 471 (RARAAAAGFEKGIDRDFEPVLSMTP).

It belongs to the PsbB/PsbC family. PsbC subfamily. As to quaternary structure, PSII is composed of 1 copy each of membrane proteins PsbA, PsbB, PsbC, PsbD, PsbE, PsbF, PsbH, PsbI, PsbJ, PsbK, PsbL, PsbM, PsbT, PsbX, PsbY, PsbZ, Psb30/Ycf12, at least 3 peripheral proteins of the oxygen-evolving complex and a large number of cofactors. It forms dimeric complexes. Binds multiple chlorophylls and provides some of the ligands for the Ca-4Mn-5O cluster of the oxygen-evolving complex. It may also provide a ligand for a Cl- that is required for oxygen evolution. PSII binds additional chlorophylls, carotenoids and specific lipids. serves as cofactor.

It localises to the plastid. It is found in the chloroplast thylakoid membrane. In terms of biological role, one of the components of the core complex of photosystem II (PSII). It binds chlorophyll and helps catalyze the primary light-induced photochemical processes of PSII. PSII is a light-driven water:plastoquinone oxidoreductase, using light energy to abstract electrons from H(2)O, generating O(2) and a proton gradient subsequently used for ATP formation. In Coffea arabica (Arabian coffee), this protein is Photosystem II CP43 reaction center protein.